A 280-amino-acid chain; its full sequence is 2-dehydro-3-deoxyphosphooctonate aldolase (280 aa).

The protein belongs to the KdsA family.

The protein resides in the cytoplasm. It catalyses the reaction D-arabinose 5-phosphate + phosphoenolpyruvate + H2O = 3-deoxy-alpha-D-manno-2-octulosonate-8-phosphate + phosphate. The protein operates within carbohydrate biosynthesis; 3-deoxy-D-manno-octulosonate biosynthesis; 3-deoxy-D-manno-octulosonate from D-ribulose 5-phosphate: step 2/3. It participates in bacterial outer membrane biogenesis; lipopolysaccharide biosynthesis. The polypeptide is 2-dehydro-3-deoxyphosphooctonate aldolase (Desulfotalea psychrophila (strain LSv54 / DSM 12343)).